Consider the following 314-residue polypeptide: Methionyl-tRNA formyltransferase (314 aa).

112–115 (SLLP) provides a ligand contact to (6S)-5,6,7,8-tetrahydrofolate.

This sequence belongs to the Fmt family.

It catalyses the reaction L-methionyl-tRNA(fMet) + (6R)-10-formyltetrahydrofolate = N-formyl-L-methionyl-tRNA(fMet) + (6S)-5,6,7,8-tetrahydrofolate + H(+). Its function is as follows. Attaches a formyl group to the free amino group of methionyl-tRNA(fMet). The formyl group appears to play a dual role in the initiator identity of N-formylmethionyl-tRNA by promoting its recognition by IF2 and preventing the misappropriation of this tRNA by the elongation apparatus. The chain is Methionyl-tRNA formyltransferase from Tolumonas auensis (strain DSM 9187 / NBRC 110442 / TA 4).